The chain runs to 706 residues: Translation factor GUF1 homolog, mitochondrial (706 aa).

In terms of domain architecture, tr-type G spans 89-272 (SRIRNFSIIA…SIVKNVPPPQ (184 aa)). GTP-binding positions include 98–105 (AHIDHGKS), 165–169 (DTPGH), and 219–222 (NKID).

This sequence belongs to the TRAFAC class translation factor GTPase superfamily. Classic translation factor GTPase family. LepA subfamily.

Its subcellular location is the mitochondrion inner membrane. It carries out the reaction GTP + H2O = GDP + phosphate + H(+). Functionally, promotes mitochondrial protein synthesis. May act as a fidelity factor of the translation reaction, by catalyzing a one-codon backward translocation of tRNAs on improperly translocated ribosomes. Binds to mitochondrial ribosomes in a GTP-dependent manner. The chain is Translation factor GUF1 homolog, mitochondrial from Thalassiosira pseudonana (Marine diatom).